Reading from the N-terminus, the 123-residue chain is MLQNSELLQEYLPIAIFFGIALLVSGLIMILPNLLSTKKYNKDKLEPYECGFEPFSDARSKFDIRFYLVAILFIIFDLEIAFLVPWAISLNMIGKIGFFSMIFFLFVLTIGFIYEWKKGALDW.

The next 3 helical transmembrane spans lie at 11–31, 68–88, and 93–113; these read YLPIAIFFGIALLVSGLIMIL, LVAILFIIFDLEIAFLVPWAI, and IGKIGFFSMIFFLFVLTIGFI.

It belongs to the complex I subunit 3 family. As to quaternary structure, NDH-1 is composed of 14 different subunits. Subunits NuoA, H, J, K, L, M, N constitute the membrane sector of the complex.

It localises to the cell inner membrane. It carries out the reaction a quinone + NADH + 5 H(+)(in) = a quinol + NAD(+) + 4 H(+)(out). Its function is as follows. NDH-1 shuttles electrons from NADH, via FMN and iron-sulfur (Fe-S) centers, to quinones in the respiratory chain. The immediate electron acceptor for the enzyme in this species is believed to be ubiquinone. Couples the redox reaction to proton translocation (for every two electrons transferred, four hydrogen ions are translocated across the cytoplasmic membrane), and thus conserves the redox energy in a proton gradient. This is NADH-quinone oxidoreductase subunit A from Rickettsia felis (strain ATCC VR-1525 / URRWXCal2) (Rickettsia azadi).